The sequence spans 375 residues: N5-carboxyaminoimidazole ribonucleotide synthase (375 aa).

Residues arginine 108, lysine 148, 153–159 (GYDGKGQ), 183–186 (EQYL), glutamate 191, histidine 214, and 266–267 (NE) contribute to the ATP site. The region spanning 112–296 (KQTLLEANTQ…QFDTHILAIT (185 aa)) is the ATP-grasp domain.

Belongs to the PurK/PurT family. Homodimer.

It catalyses the reaction 5-amino-1-(5-phospho-beta-D-ribosyl)imidazole + hydrogencarbonate + ATP = 5-carboxyamino-1-(5-phospho-D-ribosyl)imidazole + ADP + phosphate + 2 H(+). It participates in purine metabolism; IMP biosynthesis via de novo pathway; 5-amino-1-(5-phospho-D-ribosyl)imidazole-4-carboxylate from 5-amino-1-(5-phospho-D-ribosyl)imidazole (N5-CAIR route): step 1/2. Catalyzes the ATP-dependent conversion of 5-aminoimidazole ribonucleotide (AIR) and HCO(3)(-) to N5-carboxyaminoimidazole ribonucleotide (N5-CAIR). This chain is N5-carboxyaminoimidazole ribonucleotide synthase, found in Staphylococcus epidermidis (strain ATCC 35984 / DSM 28319 / BCRC 17069 / CCUG 31568 / BM 3577 / RP62A).